Here is a 538-residue protein sequence, read N- to C-terminus: Diacylglycerol O-acyltransferase 1-1 (538 aa).

2 disordered regions span residues 1–39 (MVGS…GAIV) and 54–106 (AAAA…GGGR). Over residues 69 to 83 (EAASGEPSSSSSSSP) the composition is skewed to low complexity. 7 consecutive transmembrane segments (helical) span residues 136 to 156 (AIFK…LVAV), 186 to 206 (WPLL…FAVE), 218 to 238 (VATC…VLVI), 245 to 265 (VLSG…LVSF), 293 to 313 (NLQP…TLCY), 326 to 346 (GWLI…GFII), and 382 to 402 (LWLC…AEIL). Residues 409–415 (FYKDWWN) carry the FYXDWWN motif motif. 3 helical membrane-spanning segments follow: residues 451-471 (VAVL…VAVP), 474-494 (ILKF…VLTA), and 505-525 (VGNM…CLLL). Residue His464 is part of the active site.

This sequence belongs to the membrane-bound acyltransferase family. Sterol o-acyltransferase subfamily.

It is found in the endoplasmic reticulum membrane. It carries out the reaction an acyl-CoA + a 1,2-diacyl-sn-glycerol = a triacyl-sn-glycerol + CoA. It participates in glycerolipid metabolism; triacylglycerol biosynthesis. In terms of biological role, involved in triacylglycerol (TAG) synthesis. Catalyzes the acylation of the sn-3 hydroxy group of sn-1,2-diacylglycerol using acyl-CoA. This is Diacylglycerol O-acyltransferase 1-1 from Oryza sativa subsp. japonica (Rice).